The chain runs to 149 residues: Probable flagellum biosynthesis repressor protein FlbT (149 aa).

The protein belongs to the FlbT family.

Has a post-transcriptional repressor function in flagellum biogenesis. Associates with the 5'-UTR of fljK mRNA and promotes its degradation. This Rhizobium johnstonii (strain DSM 114642 / LMG 32736 / 3841) (Rhizobium leguminosarum bv. viciae) protein is Probable flagellum biosynthesis repressor protein FlbT.